The chain runs to 274 residues: Bis(5'-nucleosyl)-tetraphosphatase, symmetrical (274 aa).

Belongs to the Ap4A hydrolase family.

It carries out the reaction P(1),P(4)-bis(5'-adenosyl) tetraphosphate + H2O = 2 ADP + 2 H(+). Hydrolyzes diadenosine 5',5'''-P1,P4-tetraphosphate to yield ADP. In Shewanella loihica (strain ATCC BAA-1088 / PV-4), this protein is Bis(5'-nucleosyl)-tetraphosphatase, symmetrical.